Here is a 100-residue protein sequence, read N- to C-terminus: MTIFNAVDKFTMMSGDRVKIKDLLSSRLTECGWRDEVRLLCRSILQEKGAISSFTVEQLVTEVTPRARSLVPDAVKKELLIKIRTIFDENEDDDIDPEDA.

It belongs to the ENY2 family. In terms of assembly, component of the nuclear pore complex (NPC)-associated AMEX complex (anchoring and mRNA export complex), composed of at least e(y)2 and xmas-2. Component of the SAGA transcription coactivator-HAT complexes, at least composed of Ada2b, e(y)2, Pcaf/Gcn5, Taf10 and Nipped-A/Trrap. Within the SAGA complex, e(y)2, Sgf11, and not/nonstop form an additional subcomplex of SAGA called the DUB module (deubiquitination module). Component of the THO complex, composed of at least e(y)2, HPR1, THO2, THOC5, THOC6 and THOC7. Interacts with e(y)1. Interacts with su(Hw) (via zinc fingers). Interacts with xmas-2; required for localization to the nuclear periphery. Interacts with the nuclear pore complex (NPC).

The protein resides in the nucleus. It is found in the nucleoplasm. Its subcellular location is the cytoplasm. Functionally, involved in mRNA export coupled transcription activation by association with both the AMEX and the SAGA complexes. The SAGA complex is a multiprotein complex that activates transcription by remodeling chromatin and mediating histone acetylation and deubiquitination. Within the SAGA complex, participates in a subcomplex that specifically deubiquitinates histone H2B. The SAGA complex is recruited to specific gene promoters by activators, where it is required for transcription. Required for nuclear receptor-mediated transactivation. Involved in transcription elongation by recruiting the THO complex onto nascent mRNA. The AMEX complex functions in docking export-competent ribonucleoprotein particles (mRNPs) to the nuclear entrance of the nuclear pore complex (nuclear basket). AMEX participates in mRNA export and accurate chromatin positioning in the nucleus by tethering genes to the nuclear periphery. This chain is Enhancer of yellow 2 transcription factor, found in Drosophila persimilis (Fruit fly).